An 863-amino-acid polypeptide reads, in one-letter code: Importin subunit beta-1 (863 aa).

19 HEAT repeats span residues asparagine 2 to threonine 31, phenylalanine 33 to lysine 62, valine 85 to threonine 124, aspartate 129 to glutamate 159, serine 170 to serine 201, glutamate 212 to tyrosine 248, proline 253 to glutamate 299, phenylalanine 314 to glycine 360, valine 364 to serine 392, valine 399 to valine 439, leucine 449 to phenylalanine 481, tyrosine 496 to phenylalanine 530, leucine 536 to arginine 586, arginine 592 to leucine 630, glutamate 635 to alanine 671, leucine 677 to isoleucine 715, glutamine 720 to alanine 767, glutamine 778 to serine 815, and lysine 822 to alanine 861. The region spanning alanine 21–serine 101 is the Importin N-terminal domain.

The protein belongs to the importin beta family. Importin beta-1 subfamily. In terms of assembly, forms a complex with an importin alpha subunit. Interacts with Ran; interacts specifically with the GTP-bound form of Ran (GTP-Ran), protecting it from GTP hydrolysis and nucleotide exchange. Interacts with nucleoporins.

It is found in the cytoplasm. Its subcellular location is the nucleus envelope. The protein localises to the nucleus. It localises to the nuclear pore complex. Its function is as follows. Importin beta subunit that functions in nuclear protein import through association with the importin alpha subunit, which binds to the clasical nuclear localization signal (cNLS) in cargo substrates. Docking of the importin/substrate complex to the nuclear pore complex (NPC) is mediated by importin beta through binding to nucleoporin FxFG repeats and the complex is subsequently translocated through the pore by an energy requiring, Ran-dependent mechanism. At the nucleoplasmic side of the NPC, GTP-Ran binds to importin beta and the three components separate, leading to release of the cargo. Importin alpha and beta are re-exported from the nucleus to the cytoplasm where GTP hydrolysis releases Ran from importin beta. The directionality of nuclear import is thought to be conferred by an asymmetric distribution of the GTP- and GDP-bound forms of Ran between the cytoplasm and nucleus. This Schizosaccharomyces pombe (strain 972 / ATCC 24843) (Fission yeast) protein is Importin subunit beta-1.